The following is a 459-amino-acid chain: Vasoactive intestinal polypeptide receptor 1 (459 aa).

The first 30 residues, 1–30 (MRPPSPPHVRWLCVLAGALACALRPAGSQA), serve as a signal peptide directing secretion. Over 31–142 (ASPQHECEYL…EQQQTKFYNT (112 aa)) the chain is Extracellular. 5 disulfide bridges follow: cysteine 37-cysteine 209, cysteine 50-cysteine 72, cysteine 63-cysteine 105, cysteine 86-cysteine 122, and cysteine 216-cysteine 286. 3 N-linked (GlcNAc...) asparagine glycosylation sites follow: asparagine 58, asparagine 69, and asparagine 100. Residues 143-167 (VKTGYTIGYSLSLASLLVAMAILSL) traverse the membrane as a helical segment. Residues 168 to 175 (FRKLHCTR) are Cytoplasmic-facing. The chain crosses the membrane as a helical span at residues 176 to 197 (NYIHMHLFMSFILRATAVFIKD). At 198 to 217 (MALFNSGEIDHCSEASVGCK) the chain is on the extracellular side. A helical membrane pass occupies residues 218–242 (AAVVFFQYCVMANFFWLLVEGLYLY). Residues 243–255 (TLLAVSFFSERKY) lie on the Cytoplasmic side of the membrane. The helical transmembrane segment at 256–277 (FWGYILIGWGVPSVFITIWTVV) threads the bilayer. The Extracellular segment spans residues 278–293 (RIYFEDFGCWDTIINS). An N-linked (GlcNAc...) asparagine glycan is attached at asparagine 292. Residues 294–318 (SLWWIIKAPILLSILVNFVLFICII) traverse the membrane as a helical segment. Topologically, residues 319–340 (RILVQKLRPPDIGKNDSSPYSR) are cytoplasmic. Residues 341-361 (LAKSTLLLIPLFGIHYVMFAF) traverse the membrane as a helical segment. The Extracellular portion of the chain corresponds to 362–369 (FPDNFKAQ). The helical transmembrane segment at 370–393 (VKMVFELVVGSFQGFVVAILYCFL) threads the bilayer. Residues 394–459 (NGEVQAELRR…SSFQAEVSLV (66 aa)) are Cytoplasmic-facing.

It belongs to the G-protein coupled receptor 2 family. Interacts with ADCYAP1/PACAP; activated by both PACAP27 and PACAP38 neuropeptides. Interacts with VIP; the interaction results in VIPR1 activation. In terms of tissue distribution, in liver, lung, intestines, thymus and brain (mostly in the cerebral cortex and hippocampus).

It localises to the cell membrane. In terms of biological role, g protein-coupled receptor activated by the neuropeptides vasoactive intestinal peptide (VIP) and pituitary adenylate cyclase-activating polypeptide (ADCYAP1/PACAP). Binds VIP and both PACAP27 and PACAP38 bioactive peptides with the following order of ligand affinity VIP = PACAP27 &gt; PACAP38. Ligand binding causes a conformation change that triggers signaling via guanine nucleotide-binding proteins (G proteins) and modulates the activity of downstream effectors. Activates cAMP-dependent pathway. The sequence is that of Vasoactive intestinal polypeptide receptor 1 from Rattus norvegicus (Rat).